The chain runs to 341 residues: L-threonine 3-dehydrogenase (341 aa).

Cys-38 contacts Zn(2+). Catalysis depends on charge relay system residues Thr-40 and His-43. Residues His-63, Glu-64, Cys-93, Cys-96, Cys-99, and Cys-107 each contribute to the Zn(2+) site. Residues Ile-175, Asp-195, Arg-200, 262–264, and 286–287 contribute to the NAD(+) site; these read LGI and IY.

It belongs to the zinc-containing alcohol dehydrogenase family. Homotetramer. Requires Zn(2+) as cofactor.

Its subcellular location is the cytoplasm. It catalyses the reaction L-threonine + NAD(+) = (2S)-2-amino-3-oxobutanoate + NADH + H(+). Its pathway is amino-acid degradation; L-threonine degradation via oxydo-reductase pathway; glycine from L-threonine: step 1/2. In terms of biological role, catalyzes the NAD(+)-dependent oxidation of L-threonine to 2-amino-3-ketobutyrate. This Shewanella sediminis (strain HAW-EB3) protein is L-threonine 3-dehydrogenase.